The primary structure comprises 715 residues: Elongation factor G (715 aa).

One can recognise a tr-type G domain in the interval 8–290 (NRYRNIGICA…AVIDFLPAPT (283 aa)). GTP contacts are provided by residues 17–24 (AHVDAGKT), 88–92 (DTPGH), and 142–145 (NKMD).

This sequence belongs to the TRAFAC class translation factor GTPase superfamily. Classic translation factor GTPase family. EF-G/EF-2 subfamily.

Its subcellular location is the cytoplasm. In terms of biological role, catalyzes the GTP-dependent ribosomal translocation step during translation elongation. During this step, the ribosome changes from the pre-translocational (PRE) to the post-translocational (POST) state as the newly formed A-site-bound peptidyl-tRNA and P-site-bound deacylated tRNA move to the P and E sites, respectively. Catalyzes the coordinated movement of the two tRNA molecules, the mRNA and conformational changes in the ribosome. In Pseudomonas fluorescens (strain ATCC BAA-477 / NRRL B-23932 / Pf-5), this protein is Elongation factor G.